The chain runs to 162 residues: SsrA-binding protein (162 aa).

This sequence belongs to the SmpB family.

The protein resides in the cytoplasm. In terms of biological role, required for rescue of stalled ribosomes mediated by trans-translation. Binds to transfer-messenger RNA (tmRNA), required for stable association of tmRNA with ribosomes. tmRNA and SmpB together mimic tRNA shape, replacing the anticodon stem-loop with SmpB. tmRNA is encoded by the ssrA gene; the 2 termini fold to resemble tRNA(Ala) and it encodes a 'tag peptide', a short internal open reading frame. During trans-translation Ala-aminoacylated tmRNA acts like a tRNA, entering the A-site of stalled ribosomes, displacing the stalled mRNA. The ribosome then switches to translate the ORF on the tmRNA; the nascent peptide is terminated with the 'tag peptide' encoded by the tmRNA and targeted for degradation. The ribosome is freed to recommence translation, which seems to be the essential function of trans-translation. In Colwellia psychrerythraea (strain 34H / ATCC BAA-681) (Vibrio psychroerythus), this protein is SsrA-binding protein.